Consider the following 40-residue polypeptide: Putative protein FAM86JP (40 aa).

Residues methionine 1 to serine 40 form a disordered region. A compositionally biased stretch (basic residues) spans serine 10–alanine 23.

In Homo sapiens (Human), this protein is Putative protein FAM86JP.